Consider the following 460-residue polypeptide: TNF receptor-associated factor family protein DDB_G0290883 (460 aa).

Residues 27–67 (CPICFEFIYKKQIYQCKSGHHACKECWEKSLETKKECMTCK) form an RING-type; degenerate zinc finger. 2 consecutive TRAF-type zinc fingers follow at residues 141-194 (SHLI…KKEL) and 196-253 (THYK…SELQ). Residues 320-448 (GYRNKWIISN…DDKLTIEIYI (129 aa)) form the MATH domain.

It belongs to the TNF receptor-associated factor family. A subfamily.

It is found in the cytoplasm. Probable adapter protein and signal transducer that links members of the tumor necrosis factor receptor family to different signaling pathways by association with the receptor cytoplasmic domain and kinases. This chain is TNF receptor-associated factor family protein DDB_G0290883, found in Dictyostelium discoideum (Social amoeba).